We begin with the raw amino-acid sequence, 496 residues long: MNMGVDKKQNTVLYISSAIALLFVLWGVFLPENMANVVNKVFALLTTNFGWLYLLAVAIFIIFVFGIAISRYGKIKLGADDDKPEFSNFQWFAMLFGGGMGIGLVFWSVAEPIMHFNSPPFGEPGTVEAMQTSMRVVFFHWGIHAWVNFAIAGLALAYFQFRKGLPFLISSAFYPLIGDRIYGPIGKAIDILAVFATIFGIATSLGLGSSQIATGIQYIWGIPAGPLTISLVIAVITVIFTLATVSGLHKAMQSIANVKVWLSVAFMVFIFYFGGKVFILNTFTQSLGDYLQNFVGQTFWMANESWVGGWTIFYWAWWIAWAPFVGQFVARVSKGRTIREFVFAVTLLPVGFSFIWLAIYGGAAFNLDQISGGFIQNAVNADYTTALFALLQQMPLYAITGPLAILLIVTCFVGAADSATYVLAMLTSNGDMDPSKKLRSFWGIMQGAMTIVLIVVGGTAALKALQTASIASAFPFMLIMLVMCYSILKALRSDHP.

Transmembrane regions (helical) follow at residues 11-31 (TVLYISSAIALLFVLWGVFLP), 49-69 (FGWLYLLAVAIFIIFVFGIAI), 89-109 (FQWFAMLFGGGMGIGLVFWSV), 136-156 (VVFFHWGIHAWVNFAIAGLAL), 188-208 (AIDILAVFATIFGIATSLGLG), 219-239 (IWGIPAGPLTISLVIAVITVI), 260-280 (VWLSVAFMVFIFYFGGKVFIL), 306-326 (WVGGWTIFYWAWWIAWAPFVG), 341-361 (FVFAVTLLPVGFSFIWLAIYG), 396-416 (LYAITGPLAILLIVTCFVGAA), 441-461 (FWGIMQGAMTIVLIVVGGTAA), and 468-488 (ASIASAFPFMLIMLVMCYSIL).

It belongs to the BCCT transporter (TC 2.A.15) family.

The protein resides in the cell membrane. Probably acts in the uptake of glycine betaine. May function in the pathway that allows anaerobic methylotrophic growth of D.hafniense using glycine betaine. The protein is Probable glycine betaine transporter of Desulfitobacterium hafniense (strain Y51).